Reading from the N-terminus, the 165-residue chain is 6,7-dimethyl-8-ribityllumazine synthase (165 aa).

5-amino-6-(D-ribitylamino)uracil contacts are provided by residues Phe24, 62–64 (AFE), and 86–88 (AVI). Position 91–92 (91–92 (DT)) interacts with (2S)-2-hydroxy-3-oxobutyl phosphate. His94 functions as the Proton donor in the catalytic mechanism. Phe119 contacts 5-amino-6-(D-ribitylamino)uracil. Arg133 is a (2S)-2-hydroxy-3-oxobutyl phosphate binding site.

The protein belongs to the DMRL synthase family.

The enzyme catalyses (2S)-2-hydroxy-3-oxobutyl phosphate + 5-amino-6-(D-ribitylamino)uracil = 6,7-dimethyl-8-(1-D-ribityl)lumazine + phosphate + 2 H2O + H(+). It participates in cofactor biosynthesis; riboflavin biosynthesis; riboflavin from 2-hydroxy-3-oxobutyl phosphate and 5-amino-6-(D-ribitylamino)uracil: step 1/2. In terms of biological role, catalyzes the formation of 6,7-dimethyl-8-ribityllumazine by condensation of 5-amino-6-(D-ribitylamino)uracil with 3,4-dihydroxy-2-butanone 4-phosphate. This is the penultimate step in the biosynthesis of riboflavin. The sequence is that of 6,7-dimethyl-8-ribityllumazine synthase from Prochlorococcus marinus (strain MIT 9303).